Consider the following 55-residue polypeptide: Small ribosomal subunit protein eS31 (55 aa).

Zn(2+)-binding residues include C26, C29, C44, and C47.

It belongs to the eukaryotic ribosomal protein eS31 family. As to quaternary structure, part of the 30S ribosomal subunit. Requires Zn(2+) as cofactor.

This Archaeoglobus fulgidus (strain ATCC 49558 / DSM 4304 / JCM 9628 / NBRC 100126 / VC-16) protein is Small ribosomal subunit protein eS31.